The following is a 193-amino-acid chain: Adenine phosphoribosyltransferase (193 aa).

Belongs to the purine/pyrimidine phosphoribosyltransferase family. Homodimer.

The protein localises to the cytoplasm. The catalysed reaction is AMP + diphosphate = 5-phospho-alpha-D-ribose 1-diphosphate + adenine. Its pathway is purine metabolism; AMP biosynthesis via salvage pathway; AMP from adenine: step 1/1. Its function is as follows. Catalyzes a salvage reaction resulting in the formation of AMP, that is energically less costly than de novo synthesis. This is Adenine phosphoribosyltransferase from Bifidobacterium adolescentis (strain ATCC 15703 / DSM 20083 / NCTC 11814 / E194a).